A 92-amino-acid chain; its full sequence is Signal recognition particle 19 kDa protein (92 aa).

This sequence belongs to the SRP19 family. Part of the signal recognition particle protein translocation system, which is composed of SRP and FtsY. Archaeal SRP consists of a 7S RNA molecule of 300 nucleotides and two protein subunits: SRP54 and SRP19.

The protein resides in the cytoplasm. In terms of biological role, involved in targeting and insertion of nascent membrane proteins into the cytoplasmic membrane. Binds directly to 7S RNA and mediates binding of the 54 kDa subunit of the SRP. The chain is Signal recognition particle 19 kDa protein from Methanosphaera stadtmanae (strain ATCC 43021 / DSM 3091 / JCM 11832 / MCB-3).